A 233-amino-acid chain; its full sequence is Biosynthetic peptidoglycan transglycosylase (233 aa).

A helical membrane pass occupies residues 8–28; sequence LIALPVGIFIFFNAYVYGNII.

Belongs to the glycosyltransferase 51 family.

The protein localises to the cell inner membrane. It carries out the reaction [GlcNAc-(1-&gt;4)-Mur2Ac(oyl-L-Ala-gamma-D-Glu-L-Lys-D-Ala-D-Ala)](n)-di-trans,octa-cis-undecaprenyl diphosphate + beta-D-GlcNAc-(1-&gt;4)-Mur2Ac(oyl-L-Ala-gamma-D-Glu-L-Lys-D-Ala-D-Ala)-di-trans,octa-cis-undecaprenyl diphosphate = [GlcNAc-(1-&gt;4)-Mur2Ac(oyl-L-Ala-gamma-D-Glu-L-Lys-D-Ala-D-Ala)](n+1)-di-trans,octa-cis-undecaprenyl diphosphate + di-trans,octa-cis-undecaprenyl diphosphate + H(+). The protein operates within cell wall biogenesis; peptidoglycan biosynthesis. Functionally, peptidoglycan polymerase that catalyzes glycan chain elongation from lipid-linked precursors. The protein is Biosynthetic peptidoglycan transglycosylase of Neisseria meningitidis serogroup C / serotype 2a (strain ATCC 700532 / DSM 15464 / FAM18).